The sequence spans 288 residues: MTARRIDGKAIAQKIHADISLRSHAFLRQWGRSPGLAVVLVGADPASRIYVQKKRETCASVGIASFSANLPADTNPQQLLAHIGELNVNDAVDGILVQLPLPPHFDPEEIIEAIAVEKDVDGFHPYNIGRLALRAPLLRSCTPAGIMTLLQESGIDIKGKEAVIVGASNIVGRPMALELLLAGATVTVCHRFTRDLAAHVGRAELLVAAAGKPGLISGAWIREGAVVIDVGINRLPDGRVTGDVDFAGAEQRAAWITPVPGGVGPMTVATLLQNTLIAAEHRMGAPHV.

NADP(+) contacts are provided by residues 166–168 (GAS) and Ile232.

The protein belongs to the tetrahydrofolate dehydrogenase/cyclohydrolase family. In terms of assembly, homodimer.

It carries out the reaction (6R)-5,10-methylene-5,6,7,8-tetrahydrofolate + NADP(+) = (6R)-5,10-methenyltetrahydrofolate + NADPH. The catalysed reaction is (6R)-5,10-methenyltetrahydrofolate + H2O = (6R)-10-formyltetrahydrofolate + H(+). The protein operates within one-carbon metabolism; tetrahydrofolate interconversion. Catalyzes the oxidation of 5,10-methylenetetrahydrofolate to 5,10-methenyltetrahydrofolate and then the hydrolysis of 5,10-methenyltetrahydrofolate to 10-formyltetrahydrofolate. This Acidithiobacillus ferrooxidans (strain ATCC 23270 / DSM 14882 / CIP 104768 / NCIMB 8455) (Ferrobacillus ferrooxidans (strain ATCC 23270)) protein is Bifunctional protein FolD.